The chain runs to 409 residues: Peptidase T (409 aa).

His-80 serves as a coordination point for Zn(2+). Asp-82 is a catalytic residue. Asp-143 provides a ligand contact to Zn(2+). The active-site Proton acceptor is the Glu-177. Residues Glu-178, Asp-200, and His-382 each coordinate Zn(2+).

It belongs to the peptidase M20B family. Zn(2+) is required as a cofactor.

The protein resides in the cytoplasm. The catalysed reaction is Release of the N-terminal residue from a tripeptide.. In terms of biological role, cleaves the N-terminal amino acid of tripeptides. This is Peptidase T from Alkaliphilus oremlandii (strain OhILAs) (Clostridium oremlandii (strain OhILAs)).